Reading from the N-terminus, the 91-residue chain is DNA-directed RNA polymerase subunit omega (91 aa).

It belongs to the RNA polymerase subunit omega family. As to quaternary structure, the RNAP catalytic core consists of 2 alpha, 1 beta, 1 beta' and 1 omega subunit. When a sigma factor is associated with the core the holoenzyme is formed, which can initiate transcription.

It carries out the reaction RNA(n) + a ribonucleoside 5'-triphosphate = RNA(n+1) + diphosphate. Its function is as follows. Promotes RNA polymerase assembly. Latches the N- and C-terminal regions of the beta' subunit thereby facilitating its interaction with the beta and alpha subunits. This Actinobacillus pleuropneumoniae serotype 5b (strain L20) protein is DNA-directed RNA polymerase subunit omega.